The chain runs to 948 residues: RNA polymerase-associated protein RapA (948 aa).

Residues 164-332 enclose the Helicase ATP-binding domain; sequence EVADRSAPRV…FARLRLLDPN (169 aa). ATP is bound at residue 177-184; it reads DEVGLGKT. A DEAH box motif is present at residues 278–281; sequence DEAH. The Helicase C-terminal domain occupies 473 to 627; that stretch reads RVDWLIDTLK…TCPTGNALQH (155 aa).

Belongs to the SNF2/RAD54 helicase family. RapA subfamily. Interacts with the RNAP. Has a higher affinity for the core RNAP than for the holoenzyme. Its ATPase activity is stimulated by binding to RNAP.

Its function is as follows. Transcription regulator that activates transcription by stimulating RNA polymerase (RNAP) recycling in case of stress conditions such as supercoiled DNA or high salt concentrations. Probably acts by releasing the RNAP, when it is trapped or immobilized on tightly supercoiled DNA. Does not activate transcription on linear DNA. Probably not involved in DNA repair. The polypeptide is RNA polymerase-associated protein RapA (Pseudomonas putida (strain GB-1)).